A 367-amino-acid polypeptide reads, in one-letter code: DNA replication and repair protein RecF (367 aa).

30 to 37 (GANGSGKT) lines the ATP pocket.

This sequence belongs to the RecF family.

It is found in the cytoplasm. Its function is as follows. The RecF protein is involved in DNA metabolism; it is required for DNA replication and normal SOS inducibility. RecF binds preferentially to single-stranded, linear DNA. It also seems to bind ATP. The protein is DNA replication and repair protein RecF of Pseudomonas fluorescens (strain ATCC BAA-477 / NRRL B-23932 / Pf-5).